The chain runs to 250 residues: Phosphoribosylaminoimidazole-succinocarboxamide synthase (250 aa).

It belongs to the SAICAR synthetase family.

The enzyme catalyses 5-amino-1-(5-phospho-D-ribosyl)imidazole-4-carboxylate + L-aspartate + ATP = (2S)-2-[5-amino-1-(5-phospho-beta-D-ribosyl)imidazole-4-carboxamido]succinate + ADP + phosphate + 2 H(+). It participates in purine metabolism; IMP biosynthesis via de novo pathway; 5-amino-1-(5-phospho-D-ribosyl)imidazole-4-carboxamide from 5-amino-1-(5-phospho-D-ribosyl)imidazole-4-carboxylate: step 1/2. The sequence is that of Phosphoribosylaminoimidazole-succinocarboxamide synthase from Picosynechococcus sp. (strain ATCC 27264 / PCC 7002 / PR-6) (Agmenellum quadruplicatum).